Consider the following 505-residue polypeptide: Deoxyguanosinetriphosphate triphosphohydrolase (505 aa).

In terms of domain architecture, HD spans 66–273 (RLTHSMEVQQ…MEAADDISYC (208 aa)).

The protein belongs to the dGTPase family. Type 1 subfamily. In terms of assembly, homotetramer. It depends on Mg(2+) as a cofactor.

The enzyme catalyses dGTP + H2O = 2'-deoxyguanosine + triphosphate + H(+). DGTPase preferentially hydrolyzes dGTP over the other canonical NTPs. The sequence is that of Deoxyguanosinetriphosphate triphosphohydrolase from Escherichia coli O7:K1 (strain IAI39 / ExPEC).